Here is a 391-residue protein sequence, read N- to C-terminus: U-box domain-containing protein 57 (391 aa).

In terms of domain architecture, MIF4G spans 1–178 (MVKNSYVLFA…DLTERLLQVE (178 aa)). Positions 322 to 391 (QPPPSFICPI…LRSAIEELGR (70 aa)) constitute a U-box domain.

It catalyses the reaction S-ubiquitinyl-[E2 ubiquitin-conjugating enzyme]-L-cysteine + [acceptor protein]-L-lysine = [E2 ubiquitin-conjugating enzyme]-L-cysteine + N(6)-ubiquitinyl-[acceptor protein]-L-lysine.. It participates in protein modification; protein ubiquitination. Functions as an E3 ubiquitin ligase. The polypeptide is U-box domain-containing protein 57 (PUB57) (Arabidopsis thaliana (Mouse-ear cress)).